Reading from the N-terminus, the 334-residue chain is MRFVDEVVIKLQAGKGGNGCVSFRREKYVPRGGPDGGDGGHGGSIYLKADENVNTLIDYRYKREYYAENGRPGEGRNCYGKAGEDMYLIVPVGTSVFDLETNKKIGEVLNNGEILKLVSGGKRGIGNTHFKSSTNQAPRKFTLGEEGEYKEVRLELNLLADIALLGLPNAGKSTLIRSVSEATPKVADYPFTTMYPHLGVVKVGVDSFVMADIPGVIEGAAEGAGLGLRFLKHLTRARCVLHVVDICPFNESDPVENYFAVEKELKKYSEELYDKPRFLVINKIDLLADEVEEKCQEFVKQIGYEGNYYMISAAMKKGTEELAKKLNEFLHKQE.

Residues 1-159 form the Obg domain; it reads MRFVDEVVIK…KEVRLELNLL (159 aa). Residues 160 to 331 enclose the OBG-type G domain; the sequence is ADIALLGLPN…LAKKLNEFLH (172 aa). Residues 166–173, 191–195, 212–215, 282–285, and 312–314 each bind GTP; these read GLPNAGKS, FTTMY, DIPG, NKID, and SAA. Ser-173 and Thr-193 together coordinate Mg(2+).

It belongs to the TRAFAC class OBG-HflX-like GTPase superfamily. OBG GTPase family. As to quaternary structure, monomer. It depends on Mg(2+) as a cofactor.

It localises to the cytoplasm. Functionally, an essential GTPase which binds GTP, GDP and possibly (p)ppGpp with moderate affinity, with high nucleotide exchange rates and a fairly low GTP hydrolysis rate. Plays a role in control of the cell cycle, stress response, ribosome biogenesis and in those bacteria that undergo differentiation, in morphogenesis control. This Francisella philomiragia subsp. philomiragia (strain ATCC 25017 / CCUG 19701 / FSC 153 / O#319-036) protein is GTPase Obg.